The following is a 406-amino-acid chain: COP9 signalosome complex subunit 4 (406 aa).

At A2 the chain carries N-acetylalanine. K25 carries the N6-acetyllysine modification. The 170-residue stretch at 197–366 folds into the PCI domain; it reads YRRKFIEAAQ…GIVHFETREA (170 aa).

It belongs to the CSN4 family. Component of the CSN complex, composed of COPS1/GPS1, COPS2, COPS3, COPS4, COPS5, COPS6, COPS7 (COPS7A or COPS7B), COPS8 and COPS9. In the complex, it probably interacts directly with COPS1, COPS2, COPS3, COPS5, COPS6, COPS7 (COPS7A or COPS7B) and COPS8. Interacts with TOR1A; the interaction is direct and associates TOR1A and SNAPIN with the CSN complex. Interacts with STON2; controls STON2 neddylation levels. Interacts with ERCC6.

It localises to the cytoplasm. The protein resides in the nucleus. It is found in the cytoplasmic vesicle. Its subcellular location is the secretory vesicle. The protein localises to the synaptic vesicle. Its function is as follows. Component of the COP9 signalosome complex (CSN), a complex involved in various cellular and developmental processes. The CSN complex is an essential regulator of the ubiquitin (Ubl) conjugation pathway by mediating the deneddylation of the cullin subunits of SCF-type E3 ligase complexes, leading to decrease the Ubl ligase activity of SCF-type complexes such as SCF, CSA or DDB2. Also involved in the deneddylation of non-cullin subunits such as STON2. The complex is also involved in phosphorylation of p53/TP53, c-jun/JUN, IkappaBalpha/NFKBIA, ITPK1, IRF8/ICSBP and SNAPIN, possibly via its association with CK2 and PKD kinases. CSN-dependent phosphorylation of TP53 and JUN promotes and protects degradation by the Ubl system, respectively. The polypeptide is COP9 signalosome complex subunit 4 (Cops4) (Rattus norvegicus (Rat)).